Consider the following 351-residue polypeptide: Dihydroorotate dehydrogenase (quinone) (351 aa).

FMN-binding positions include 61–65 and Thr85; that span reads AGLDK. Lys65 serves as a coordination point for substrate. Residue 110 to 114 participates in substrate binding; sequence NRMGF. Asn139 and Asn172 together coordinate FMN. Asn172 provides a ligand contact to substrate. Residue Ser175 is the Nucleophile of the active site. Asn177 serves as a coordination point for substrate. Residues Lys217 and Thr245 each coordinate FMN. 246 to 247 lines the substrate pocket; it reads NT. FMN contacts are provided by residues Gly268, Gly297, and 318–319; that span reads YS.

This sequence belongs to the dihydroorotate dehydrogenase family. Type 2 subfamily. Monomer. FMN is required as a cofactor.

The protein localises to the cell membrane. It catalyses the reaction (S)-dihydroorotate + a quinone = orotate + a quinol. It participates in pyrimidine metabolism; UMP biosynthesis via de novo pathway; orotate from (S)-dihydroorotate (quinone route): step 1/1. Functionally, catalyzes the conversion of dihydroorotate to orotate with quinone as electron acceptor. The sequence is that of Dihydroorotate dehydrogenase (quinone) from Xanthomonas oryzae pv. oryzae (strain PXO99A).